Reading from the N-terminus, the 160-residue chain is Transcription elongation factor GreA (160 aa).

The stretch at 11-38 forms a coiled coil; that stretch reads YDRLMKELERLKSERPAIIQAIKEAREE.

This sequence belongs to the GreA/GreB family.

Its function is as follows. Necessary for efficient RNA polymerase transcription elongation past template-encoded arresting sites. The arresting sites in DNA have the property of trapping a certain fraction of elongating RNA polymerases that pass through, resulting in locked ternary complexes. Cleavage of the nascent transcript by cleavage factors such as GreA or GreB allows the resumption of elongation from the new 3'terminus. GreA releases sequences of 2 to 3 nucleotides. This Nitratidesulfovibrio vulgaris (strain DSM 19637 / Miyazaki F) (Desulfovibrio vulgaris) protein is Transcription elongation factor GreA.